The chain runs to 695 residues: Interleukin-1 receptor accessory protein-like 1 (695 aa).

The first 24 residues, 1 to 24 (MKAPIPHLILLYATFTQSLKVVTK), serve as a signal peptide directing secretion. Residues 25–134 (RGSADGCTDW…YCMKVSISLT (110 aa)) enclose the Ig-like C2-type 1 domain. The Extracellular portion of the chain corresponds to 25–357 (RGSADGCTDW…LLHKRELMYT (333 aa)). 2 disulfide bridges follow: Cys31–Cys126 and Cys53–Cys118. 3 N-linked (GlcNAc...) asparagine glycosylation sites follow: Asn63, Asn122, and Asn138. Cystine bridges form between Cys143–Cys185 and Cys164–Cys216. 2 Ig-like C2-type domains span residues 143–232 (CYNS…TELT) and 242–350 (PKLL…VLLH). Asn213, Asn264, and Asn331 each carry an N-linked (GlcNAc...) asparagine glycan. Cysteines 267 and 334 form a disulfide. A helical transmembrane segment spans residues 358-378 (VELAGGLGAILLLLICSVTIY). Topologically, residues 379-695 (KCYKIEIMLF…RETSISSVIW (317 aa)) are cytoplasmic. Residues 403–558 (KDYDAYLSYT…KFWKRLQYEM (156 aa)) form the TIR domain. Glu490 is a catalytic residue. The tract at residues 548 to 643 (SKFWKRLQYE…TGTLPLTSIG (96 aa)) is interaction with NCS1. Residues 657–679 (NGQRPQTKSNREPNPDEAHTNSA) form a disordered region. A compositionally biased stretch (basic and acidic residues) spans 665 to 675 (SNREPNPDEAH).

The protein belongs to the interleukin-1 receptor family. Homodimer. Interacts (calcium-independent) with NCS1/FREQ. Interacts (via the first immunoglobilin domain) with PTPRD (via the second immunoglobilin domain); this interaction is PTPRD-splicing-dependent and induces pre- and post-synaptic differentiation of neurons and is required for IL1RAPL1-mediated synapse formation. Detected in total brain extracts, olfactory bulb, hippocampus and striatum (at protein level).

The protein resides in the cell membrane. It localises to the cytoplasm. It is found in the cell projection. The protein localises to the axon. Its subcellular location is the dendrite. It carries out the reaction NAD(+) + H2O = ADP-D-ribose + nicotinamide + H(+). Its function is as follows. May regulate secretion and presynaptic differentiation through inhibition of the activity of N-type voltage-gated calcium channel. May activate the MAP kinase JNK. Plays a role in neurite outgrowth. During dendritic spine formation can bidirectionally induce pre- and post-synaptic differentiation of neurons by trans-synaptically binding to PTPRD. This Mus musculus (Mouse) protein is Interleukin-1 receptor accessory protein-like 1 (Il1rapl1).